The following is a 424-amino-acid chain: GTPase Obg (424 aa).

In terms of domain architecture, Obg spans 1–160 (MFDRVEIRIK…YELILELKLI (160 aa)). An OBG-type G domain is found at 161 to 328 (ADVAIIGYPN…LLDKVAEKLA (168 aa)). GTP-binding positions include 167–174 (GYPNVGKS), 192–196 (FTTLS), 213–216 (EVPG), 280–283 (NKID), and 309–311 (SAL). The Mg(2+) site is built by Ser174 and Thr194. The region spanning 349-424 (PAPKGKMGFH…IITGRLEWYL (76 aa)) is the OCT domain.

It belongs to the TRAFAC class OBG-HflX-like GTPase superfamily. OBG GTPase family. Monomer. Mg(2+) serves as cofactor.

The protein resides in the cytoplasm. Functionally, an essential GTPase which binds GTP, GDP and possibly (p)ppGpp with moderate affinity, with high nucleotide exchange rates and a fairly low GTP hydrolysis rate. Plays a role in control of the cell cycle, stress response, ribosome biogenesis and in those bacteria that undergo differentiation, in morphogenesis control. The sequence is that of GTPase Obg from Dehalococcoides mccartyi (strain ATCC BAA-2266 / KCTC 15142 / 195) (Dehalococcoides ethenogenes (strain 195)).